The sequence spans 481 residues: Surface lipoprotein assembly modifier 1 (481 aa).

An N-terminal signal peptide occupies residues 1–23 (MSIQTKFILFLSSSLFLTPYSVA). The interval 25 to 192 (EKSPQPHDGR…QYLSALNQRD (168 aa)) is N-terminal domain. Residues 193–481 (QWKIQGGFSF…RIYVEISKTF (289 aa)) form a C-terminal probable beta barrel region. 14 consecutive transmembrane segments (beta stranded) span residues 194-204 (WKIQGGFSFLN), 233-243 (SYFGNAEKKWS), 248-258 (HFTKLSLEGSG), 271-281 (NARAGVGLGYQ), 285-295 (FELSLMPFTEK), 315-325 (SGARLDLSNWL), 329-338 (WQISTALEYG), 353-363 (YLASATLLYLA), 368-377 (YWFGGADYNR), 390-400 (KNVRLGWGQEW), 405-414 (STRLILNYAR), 432-441 (YASVLTIWHR), 448-458 (ITPKLSWSYQK), and 471-481 (NRIYVEISKTF).

This sequence belongs to the Slam family.

It localises to the cell outer membrane. Its function is as follows. Required for correct export to the cell surface of some cell outer membrane lipoproteins. This chain is Surface lipoprotein assembly modifier 1, found in Haemophilus influenzae (strain ATCC 51907 / DSM 11121 / KW20 / Rd).